We begin with the raw amino-acid sequence, 574 residues long: WAP, Kazal, immunoglobulin, Kunitz and NTR domain-containing protein 2 (574 aa).

Residues 1–32 (MWALRGCRSGSRWGQGAALLLLLLGVPPRGLA) form the signal peptide. Positions 37–90 (RYSHAGICPNDMNPNLWVDAQSTCKRECETDQECETYEKCCPNVCGTKSCVAAR) constitute a WAP domain. Intrachain disulfides connect Cys-44–Cys-77, Cys-60–Cys-81, Cys-64–Cys-76, Cys-70–Cys-86, Cys-132–Cys-162, Cys-136–Cys-155, Cys-144–Cys-173, Cys-229–Cys-285, Cys-326–Cys-376, Cys-335–Cys-359, Cys-351–Cys-372, Cys-384–Cys-434, Cys-393–Cys-417, Cys-409–Cys-430, Cys-443–Cys-513, Cys-446–Cys-515, and Cys-457–Cys-564. The Kazal-like domain occupies 124 to 175 (WDGQPVCKCRDRCEKEPSFTCASDGLTYYNRCYMDAEACSKGITLAVVTCRY). The Ig-like C2-type domain occupies 208–301 (PALLNHPAHQ…GVLRADFPLS (94 aa)). 2 consecutive BPTI/Kunitz inhibitor domains span residues 326 to 376 (CLKP…MLAC) and 384 to 434 (CSLP…EESC). The region spanning 443–564 (CRACKPRQKL…LREVMHKKTC (122 aa)) is the NTR domain. The N-linked (GlcNAc...) asparagine glycan is linked to Asn-517.

It belongs to the WFIKKN family. As to quaternary structure, interacts with both mature and propeptide myostatin/MSTN.

The protein localises to the secreted. Functionally, protease-inhibitor that contains multiple distinct protease inhibitor domains. Probably has serine protease- and metalloprotease-inhibitor activity. Inhibits the biological activity of mature myostatin, but not activin. The chain is WAP, Kazal, immunoglobulin, Kunitz and NTR domain-containing protein 2 (WFIKKN2) from Bos taurus (Bovine).